The following is a 432-amino-acid chain: Probable anion transporter 5 (432 aa).

The signal sequence occupies residues 1–23 (MKLSNIPQRYVIVFLTFLSTCVC). Transmembrane regions (helical) follow at residues 50–70 (TILS…GWAA), 78–98 (VLLL…LDPN), 101–121 (GLLV…FPSI), 140–160 (ITTS…PALV), 164–184 (GPES…LLWI), 229–249 (LPVW…YVLM), 273–293 (VPYL…DYLI), 305–325 (KFLN…LPMF), 331–351 (VILC…GFAV), 360–380 (YAGI…IIGV), and 405–425 (VVFF…LLFS).

Belongs to the major facilitator superfamily. Sodium/anion cotransporter (TC 2.A.1.14) family. Ubiquitous.

The protein localises to the golgi apparatus membrane. In terms of biological role, inorganic phosphate and probable anion transporter. The protein is Probable anion transporter 5 (ANTR5) of Arabidopsis thaliana (Mouse-ear cress).